The primary structure comprises 191 residues: Octanoyltransferase (191 aa).

Residues 10 to 185 form the BPL/LPL catalytic domain; it reads ENSHDEIWLV…NILALLNNPP (176 aa). Substrate-binding positions include 49 to 56, 116 to 118, and 129 to 131; these read RGGQVTYH, SLG, and GLA. Cys147 acts as the Acyl-thioester intermediate in catalysis.

It belongs to the LipB family.

It localises to the cytoplasm. The enzyme catalyses octanoyl-[ACP] + L-lysyl-[protein] = N(6)-octanoyl-L-lysyl-[protein] + holo-[ACP] + H(+). The protein operates within protein modification; protein lipoylation via endogenous pathway; protein N(6)-(lipoyl)lysine from octanoyl-[acyl-carrier-protein]: step 1/2. Functionally, catalyzes the transfer of endogenously produced octanoic acid from octanoyl-acyl-carrier-protein onto the lipoyl domains of lipoate-dependent enzymes. Lipoyl-ACP can also act as a substrate although octanoyl-ACP is likely to be the physiological substrate. The sequence is that of Octanoyltransferase from Salmonella choleraesuis (strain SC-B67).